The sequence spans 453 residues: MSPQTETKAGVGFKAGVKEYKLTYYTPEYETKDTDILAAFRVTPQPGVPPEERGAAVAAESSTGTWTTVWTDGLTSLDRYKGRCYHIEPVPGEEDQFIAYVAYPLDLFEEGSVTNMFTSIVGNVFGFKALRALRLEDLRIPVAYVKTFQGPPHGIQVERDKLNKYGRPLLGCTIKPKLGLSAKNYGRAVYECLRGGLDFTKDDENVNSQPFMRWRDRFLFCAEAIYKSQAETGEIKGHYLNATAGTCEEMIKRAVFARELGVPIVMHDYLTGGFTANTSLSHYCRDNGLLLHIHRAMHAVIDRQKNHGMHFRVLAKALRMSGGDHIHSGTVVGKLEGERDITLGFVDLLRDDYIEKDRSRGIYFTQDWVSLPGVLPVASRGIHVWHMPALTEIFGDDSVLQFGGGTLGHPWGNAPGAVANRVALEACVKARNEGRDLAAEGGEIIREACKWSP.

Positions M1–S2 are excised as a propeptide. P3 bears the N-acetylproline mark. K14 bears the N6,N6,N6-trimethyllysine mark. Residues N123 and T173 each coordinate substrate. The Proton acceptor role is filled by K175. K177 contacts substrate. Positions 201, 203, and 204 each coordinate Mg(2+). An N6-carboxylysine modification is found at K201. The Proton acceptor role is filled by H294. 3 residues coordinate substrate: R295, H327, and S379.

Belongs to the RuBisCO large chain family. Type I subfamily. As to quaternary structure, heterohexadecamer of 8 large chains and 8 small chains; disulfide-linked. The disulfide link is formed within the large subunit homodimers. Mg(2+) is required as a cofactor. The disulfide bond which can form in the large chain dimeric partners within the hexadecamer appears to be associated with oxidative stress and protein turnover.

The protein resides in the plastid. Its subcellular location is the chloroplast. The catalysed reaction is 2 (2R)-3-phosphoglycerate + 2 H(+) = D-ribulose 1,5-bisphosphate + CO2 + H2O. It carries out the reaction D-ribulose 1,5-bisphosphate + O2 = 2-phosphoglycolate + (2R)-3-phosphoglycerate + 2 H(+). In terms of biological role, ruBisCO catalyzes two reactions: the carboxylation of D-ribulose 1,5-bisphosphate, the primary event in carbon dioxide fixation, as well as the oxidative fragmentation of the pentose substrate in the photorespiration process. Both reactions occur simultaneously and in competition at the same active site. The sequence is that of Ribulose bisphosphate carboxylase large chain from Galium palustre (Common marsh bedstraw).